The primary structure comprises 317 residues: MARRSKGRQIDGIVLLDKDTGMSSNYALQRVKRFFNANKAGHTGALDPLATGMLPICLGEATKFSQHLLDADKRYLVTAKLGVRTDTSDSDGEVVQTRDINFTQAQLETALEHFRGDTMQVPSMFSALKHQGQPLYKYAREGIEVPREARPITVFELNFIKLEGDELTLDIHCSKGTYIRTITDDLGEMLGCGAHVIMLRRTQVADYPYDKMVSLADLEALVTQAQQQELAVGELLDPLLLPMDTAVANFPEINLPESMLYYVMQGQAVQASGLKIDVLVRITIGEQRKFVGIGIMNDDGLLAPKRLIVIPAEESPE.

The Nucleophile role is filled by D47.

The protein belongs to the pseudouridine synthase TruB family. Type 1 subfamily.

It carries out the reaction uridine(55) in tRNA = pseudouridine(55) in tRNA. Responsible for synthesis of pseudouridine from uracil-55 in the psi GC loop of transfer RNAs. In Shewanella denitrificans (strain OS217 / ATCC BAA-1090 / DSM 15013), this protein is tRNA pseudouridine synthase B.